We begin with the raw amino-acid sequence, 302 residues long: Gamma-gliadin (302 aa).

Positions Met-1–Ala-19 are cleaved as a signal peptide. Residues Gly-27–Ala-159 form a disordered region. Positions Gln-42 to Gln-102 are enriched in low complexity. Residues Pro-103–Pro-124 are compositionally biased toward pro residues. Positions Phe-125–Ala-159 are enriched in low complexity.

This sequence belongs to the gliadin/glutenin family.

In terms of biological role, gliadin is the major seed storage protein in wheat. The chain is Gamma-gliadin from Triticum aestivum (Wheat).